A 466-amino-acid chain; its full sequence is MSNGTIVQCIGAVVDIQFPRDNMPKIYEALTLVDEGSSFAEKGLTLEVQQQLGDGVVRTIALGSSDGLRRGMQVAGTGAPISVPVGHGTLGRIMDVLGRPIDEAGPIASDEKRAIHQPAPRFDELSPSVELLETGIKVIDLVCPFAKGGKVGLFGGAGVGKTVNMMELINNIAKQHSGLSVFAGVGERTREGNDFYHEMEESNVLDKVAMVFGQMNEPPGNRLRVALTGLTMAEKFRDEGRDILFFVDNIYRYTLAGTEVSALLGRMPSAVGYQPTLAEEMGVLQERITSTKTGSITSIQAVYVPADDLTDPSPATTFQHLDSTVVLSRDIAALGIYPAVDPLDSSSRQLDPQVVGEEHYQVARGVQQTLQRYKELRDIIAILGMDELSPEDKQAVARARKIQRFLSQPFHVAEVFTGSPGKYVSLAETIRGFKMIVDGECDALPEQAFYMVGTIDEAFEKAKKLQ.

Residue 155-162 (GGAGVGKT) coordinates ATP.

This sequence belongs to the ATPase alpha/beta chains family. In terms of assembly, F-type ATPases have 2 components, CF(1) - the catalytic core - and CF(0) - the membrane proton channel. CF(1) has five subunits: alpha(3), beta(3), gamma(1), delta(1), epsilon(1). CF(0) has three main subunits: a(1), b(2) and c(9-12). The alpha and beta chains form an alternating ring which encloses part of the gamma chain. CF(1) is attached to CF(0) by a central stalk formed by the gamma and epsilon chains, while a peripheral stalk is formed by the delta and b chains.

The protein resides in the cell inner membrane. It carries out the reaction ATP + H2O + 4 H(+)(in) = ADP + phosphate + 5 H(+)(out). In terms of biological role, produces ATP from ADP in the presence of a proton gradient across the membrane. The catalytic sites are hosted primarily by the beta subunits. The protein is ATP synthase subunit beta of Bordetella bronchiseptica (strain ATCC BAA-588 / NCTC 13252 / RB50) (Alcaligenes bronchisepticus).